Reading from the N-terminus, the 923-residue chain is DNA gyrase subunit A (923 aa).

The Topo IIA-type catalytic domain maps to 34–534; that stretch reads LPDARDGLKP…SQVDLTIADL (501 aa). Catalysis depends on tyrosine 122, which acts as the O-(5'-phospho-DNA)-tyrosine intermediate. A GyrA-box motif is present at residues 561-567; that stretch reads QRRGGKG. The segment at 881–923 is disordered; it reads ERVQEPSGGDDEDLPEGEEAAESLGESAESESEPAAEAEGNEE. Composition is skewed to acidic residues over residues 888-901 and 908-923; these read GGDD…EEAA and AESE…GNEE.

The protein belongs to the type II topoisomerase GyrA/ParC subunit family. As to quaternary structure, heterotetramer, composed of two GyrA and two GyrB chains. In the heterotetramer, GyrA contains the active site tyrosine that forms a transient covalent intermediate with DNA, while GyrB binds cofactors and catalyzes ATP hydrolysis.

Its subcellular location is the cytoplasm. It carries out the reaction ATP-dependent breakage, passage and rejoining of double-stranded DNA.. Its function is as follows. A type II topoisomerase that negatively supercoils closed circular double-stranded (ds) DNA in an ATP-dependent manner to modulate DNA topology and maintain chromosomes in an underwound state. Negative supercoiling favors strand separation, and DNA replication, transcription, recombination and repair, all of which involve strand separation. Also able to catalyze the interconversion of other topological isomers of dsDNA rings, including catenanes and knotted rings. Type II topoisomerases break and join 2 DNA strands simultaneously in an ATP-dependent manner. The polypeptide is DNA gyrase subunit A (Pseudomonas aeruginosa (strain ATCC 15692 / DSM 22644 / CIP 104116 / JCM 14847 / LMG 12228 / 1C / PRS 101 / PAO1)).